The following is a 263-amino-acid chain: HTH-type transcriptional repressor NanR (263 aa).

Positions 30 to 98 constitute an HTH gntR-type domain; that stretch reads KKLSEMVEEE…NGERARVSRP (69 aa). The segment at residues 58-77 is a DNA-binding region (H-T-H motif); that stretch reads ERELMAFFNVGRPSVREALA.

The protein belongs to the NanR family.

In terms of biological role, transcriptional repressor that controls expression of the genes required for the catabolism of sialic acids. The sequence is that of HTH-type transcriptional repressor NanR from Salmonella arizonae (strain ATCC BAA-731 / CDC346-86 / RSK2980).